The primary structure comprises 1086 residues: Rh5-interacting protein (1086 aa).

The first 19 residues, 1 to 19 (MFRIFFTLLIIILIKKTSA), serve as a signal peptide directing secretion. Asparagine 103, asparagine 144, asparagine 228, asparagine 303, asparagine 334, asparagine 480, asparagine 498, asparagine 506, asparagine 526, and asparagine 646 each carry an N-linked (GlcNAc...) asparagine glycan. 2 consecutive EGF-like domains span residues 287-321 (RCTQDICSVNQFCDGENETCTCKTSLLPSAKNNCE) and 325-362 (LCTVLNCPENSTCEQIGNGKKAECKCENGKYYHNNKCY). EGF-like domains follow at residues 636-675 (SCSNLCNKCHNNSTCYGNRFNYDCFCDNPYISKYGNKLCE), 679-715 (DCESVLCSQNQVCQILPNDKLICQCEEGYKNVKGKCV), 719-753 (KCDLSCPSNKVCVIENGKQTCKCSERFVLENGVCI), 818-854 (YCKDINCKENEECSIVNFKPECVCKENLKKNNKGECI), 858-897 (SCLINEGNCPKDSKCIYREYKPHECVCNKQGHVAVNGKCV), 901-938 (KCVHNKKCSENSICVNVMNKEPICVCTYNYYKKDGVCL), and 942-979 (PCLKDNGGCSRNSECTFKYSKINCTCKENYKNKDDSCV). Asparagine 964 and asparagine 1021 each carry an N-linked (GlcNAc...) asparagine glycan.

In terms of assembly, component of the PfRH5 adhesion complex composed of 1 copy of CyRPA, RH5 and RIPR; the complex is formed during merozoite invasion of host erythrocytes specifically at the interface between the parasite and host membranes. Within the complex, interacts with CyRPA. CyRPA recruitment of RIPR to RH5-P113-BSG leads to the formation of the PfRH5 adhesion complex which probably in turn releases RH5 from P113 while maintaining the interaction of the PfRH5 adhesion complex with BSG. In terms of processing, proteolytically cleaved into two chains of 125kDa and 65kDa which remain associated. The cleavage occurs at the schizont stage prior to the release of merozoites. Contains disulfide bonds.

It localises to the secreted. Its subcellular location is the cytoplasmic vesicle. It is found in the secretory vesicle. The protein resides in the microneme lumen. The protein localises to the cell membrane. It localises to the host cell membrane. Its function is as follows. Essential for the invasion of host erythrocytes by blood stage merozoites. As part of the PfRH5 adhesion complex, facilitates the interaction of RH5 and human BSG required for the Ca(2+) release into the erythrocyte. The chain is Rh5-interacting protein (RIPR) from Plasmodium falciparum (isolate 3D7).